A 392-amino-acid chain; its full sequence is Phosphoglycerate kinase (392 aa).

Substrate contacts are provided by residues 21-23 (DFN), Arg-36, 59-62 (HLGR), Arg-117, and Arg-150. ATP contacts are provided by residues Lys-200, Gly-288, Glu-319, and 345-348 (GGDS).

The protein belongs to the phosphoglycerate kinase family. Monomer.

It is found in the cytoplasm. The catalysed reaction is (2R)-3-phosphoglycerate + ATP = (2R)-3-phospho-glyceroyl phosphate + ADP. The protein operates within carbohydrate degradation; glycolysis; pyruvate from D-glyceraldehyde 3-phosphate: step 2/5. In Rubrobacter xylanophilus (strain DSM 9941 / JCM 11954 / NBRC 16129 / PRD-1), this protein is Phosphoglycerate kinase.